The chain runs to 213 residues: Glycerol-3-phosphate acyltransferase (213 aa).

The next 6 membrane-spanning stretches (helical) occupy residues 3–23 (IIIL…GLWI), 48–68 (ILGV…GTLA), 71–91 (LPLI…LAVI), 119–139 (PFFL…FSMI), 144–164 (VVAA…GFIL), and 165–185 (TSYD…IIFR).

The protein belongs to the PlsY family. In terms of assembly, probably interacts with PlsX.

The protein resides in the cell membrane. It carries out the reaction an acyl phosphate + sn-glycerol 3-phosphate = a 1-acyl-sn-glycero-3-phosphate + phosphate. It functions in the pathway lipid metabolism; phospholipid metabolism. In terms of biological role, catalyzes the transfer of an acyl group from acyl-phosphate (acyl-PO(4)) to glycerol-3-phosphate (G3P) to form lysophosphatidic acid (LPA). This enzyme utilizes acyl-phosphate as fatty acyl donor, but not acyl-CoA or acyl-ACP. In Lactococcus lactis subsp. cremoris (strain SK11), this protein is Glycerol-3-phosphate acyltransferase.